The chain runs to 295 residues: Tyrosine recombinase XerC (295 aa).

The 85-residue stretch at 1–85 (MQNALQKYYD…ALRQFLAYLV (85 aa)) folds into the Core-binding (CB) domain. The region spanning 106 to 285 (YLPKNIDQEQ…DFKHLTDVYD (180 aa)) is the Tyr recombinase domain. Residues Arg145, Lys169, His237, Arg240, and His263 contribute to the active site. Tyr272 serves as the catalytic O-(3'-phospho-DNA)-tyrosine intermediate.

This sequence belongs to the 'phage' integrase family. XerC subfamily. In terms of assembly, forms a cyclic heterotetrameric complex composed of two molecules of XerC and two molecules of XerD.

It localises to the cytoplasm. Site-specific tyrosine recombinase, which acts by catalyzing the cutting and rejoining of the recombining DNA molecules. The XerC-XerD complex is essential to convert dimers of the bacterial chromosome into monomers to permit their segregation at cell division. It also contributes to the segregational stability of plasmids. The sequence is that of Tyrosine recombinase XerC from Actinobacillus succinogenes (strain ATCC 55618 / DSM 22257 / CCUG 43843 / 130Z).